The sequence spans 340 residues: N-acetyl-gamma-glutamyl-phosphate reductase (340 aa).

Residue cysteine 149 is part of the active site.

This sequence belongs to the NAGSA dehydrogenase family. Type 1 subfamily.

The protein resides in the cytoplasm. It catalyses the reaction N-acetyl-L-glutamate 5-semialdehyde + phosphate + NADP(+) = N-acetyl-L-glutamyl 5-phosphate + NADPH + H(+). It participates in amino-acid biosynthesis; L-arginine biosynthesis; N(2)-acetyl-L-ornithine from L-glutamate: step 3/4. In terms of biological role, catalyzes the NADPH-dependent reduction of N-acetyl-5-glutamyl phosphate to yield N-acetyl-L-glutamate 5-semialdehyde. In Vesicomyosocius okutanii subsp. Calyptogena okutanii (strain HA), this protein is N-acetyl-gamma-glutamyl-phosphate reductase.